Reading from the N-terminus, the 56-residue chain is MPMPVLIFLIGYLPFFLAAYWIYDMESVRKQAITAGAILSFDAAMLAIFGGILGWI.

Helical transmembrane passes span 5–23 (VLIF…YWIY) and 33–55 (ITAG…ILGW).

The protein localises to the cell membrane. This is an uncharacterized protein from Archaeoglobus fulgidus (strain ATCC 49558 / DSM 4304 / JCM 9628 / NBRC 100126 / VC-16).